A 240-amino-acid polypeptide reads, in one-letter code: Izumo sperm-egg fusion protein 3 (240 aa).

The first 22 residues, 1 to 22 (MGDLWLLLLLPLSLAAFHGVKG), serve as a signal peptide directing secretion. Topologically, residues 23–176 (CLECDPKFIE…DDPKKAESRE (154 aa)) are extracellular. The chain crosses the membrane as a helical span at residues 177 to 197 (IGLFLILLAEGVILGGVLLLF). Topologically, residues 198 to 240 (HFCISHQRKMKAIRRSLKTYLEKKLEELMGIKDEKEKDFRGRE) are cytoplasmic.

It belongs to the Izumo family. In terms of assembly, monomer and homodimer.

It is found in the cell membrane. The protein is Izumo sperm-egg fusion protein 3 (IZUMO3) of Bos taurus (Bovine).